The following is a 306-amino-acid chain: Protein-methionine-sulfoxide reductase catalytic subunit MsrP (306 aa).

A signal peptide (tat-type signal) is located at residues 1 to 45 (MLIRHAPDLTDNDVTDHSLYLKRRTLMAGVAGLGVAGASASHAQA). Mo-molybdopterin-binding positions include Asn69, 72–73 (YE), Cys127, Thr162, Asn210, Arg215, and 226–228 (GIK).

Belongs to the MsrP family. In terms of assembly, heterodimer of a catalytic subunit (MsrP) and a heme-binding subunit (MsrQ). It depends on Mo-molybdopterin as a cofactor. Predicted to be exported by the Tat system. The position of the signal peptide cleavage has not been experimentally proven.

Its subcellular location is the periplasm. It carries out the reaction L-methionyl-[protein] + a quinone + H2O = L-methionyl-(S)-S-oxide-[protein] + a quinol. The catalysed reaction is L-methionyl-[protein] + a quinone + H2O = L-methionyl-(R)-S-oxide-[protein] + a quinol. In terms of biological role, part of the MsrPQ system that repairs oxidized periplasmic proteins containing methionine sulfoxide residues (Met-O), using respiratory chain electrons. Thus protects these proteins from oxidative-stress damage caused by reactive species of oxygen and chlorine generated by the host defense mechanisms. MsrPQ is essential for the maintenance of envelope integrity under bleach stress, rescuing a wide series of structurally unrelated periplasmic proteins from methionine oxidation. The catalytic subunit MsrP is non-stereospecific, being able to reduce both (R-) and (S-) diastereoisomers of methionine sulfoxide. This Caulobacter vibrioides (strain ATCC 19089 / CIP 103742 / CB 15) (Caulobacter crescentus) protein is Protein-methionine-sulfoxide reductase catalytic subunit MsrP.